The primary structure comprises 308 residues: Acetyl-coenzyme A carboxylase carboxyl transferase subunit beta 1 (308 aa).

The CoA carboxyltransferase N-terminal domain occupies 25–294; sequence VWTKCTSCEQ…PLVVSVNESP (270 aa). The Zn(2+) site is built by cysteine 29, cysteine 32, cysteine 48, and cysteine 51. The C4-type zinc finger occupies 29 to 51; sequence CTSCEQVLYHAELERNLEVCPKC. The disordered stretch occupies residues 288–308; it reads VSVNESPNEEPYSVPEVDEKG.

It belongs to the AccD/PCCB family. In terms of assembly, acetyl-CoA carboxylase is a heterohexamer composed of biotin carboxyl carrier protein (AccB), biotin carboxylase (AccC) and two subunits each of ACCase subunit alpha (AccA) and ACCase subunit beta (AccD). It depends on Zn(2+) as a cofactor.

The protein localises to the cytoplasm. It catalyses the reaction N(6)-carboxybiotinyl-L-lysyl-[protein] + acetyl-CoA = N(6)-biotinyl-L-lysyl-[protein] + malonyl-CoA. Its pathway is lipid metabolism; malonyl-CoA biosynthesis; malonyl-CoA from acetyl-CoA: step 1/1. Component of the acetyl coenzyme A carboxylase (ACC) complex. Biotin carboxylase (BC) catalyzes the carboxylation of biotin on its carrier protein (BCCP) and then the CO(2) group is transferred by the transcarboxylase to acetyl-CoA to form malonyl-CoA. The protein is Acetyl-coenzyme A carboxylase carboxyl transferase subunit beta 1 of Vibrio parahaemolyticus serotype O3:K6 (strain RIMD 2210633).